A 315-amino-acid chain; its full sequence is 3-chlorobenzoate-3,4-dioxygenase reductase subunit (315 aa).

1–103 (MVAIDQHDTY…GATTRISAPR (103 aa)) serves as a coordination point for FMN. Residues 7-109 (HDTYSVRVIS…SAPRNAFALD (103 aa)) form the FAD-binding FR-type domain. In terms of domain architecture, 2Fe-2S ferredoxin-type spans 228-315 (NEFTVNLARS…ALSPELTLDL (88 aa)). The [2Fe-2S] cluster site is built by Cys-264, Cys-269, Cys-272, and Cys-302.

It belongs to the PDR/VanB family. In terms of assembly, this dioxygenase system consists of two proteins: phthalate oxygenase and phthalate oxygenase reductase. It depends on FMN as a cofactor.

This Comamonas testosteroni (Pseudomonas testosteroni) protein is 3-chlorobenzoate-3,4-dioxygenase reductase subunit (cbaB).